We begin with the raw amino-acid sequence, 260 residues long: Tryptophan 2,3-dioxygenase (260 aa).

Residues 34–38 and Arg100 contribute to the substrate site; that span reads FIVIH. His219 provides a ligand contact to heme. Thr233 is a binding site for substrate.

Belongs to the tryptophan 2,3-dioxygenase family. As to quaternary structure, homotetramer. It depends on heme as a cofactor.

It carries out the reaction L-tryptophan + O2 = N-formyl-L-kynurenine. Its pathway is amino-acid degradation; L-tryptophan degradation via kynurenine pathway; L-kynurenine from L-tryptophan: step 1/2. Functionally, heme-dependent dioxygenase that catalyzes the oxidative cleavage of the L-tryptophan (L-Trp) pyrrole ring and converts L-tryptophan to N-formyl-L-kynurenine. Catalyzes the oxidative cleavage of the indole moiety. The chain is Tryptophan 2,3-dioxygenase from Herpetosiphon aurantiacus (strain ATCC 23779 / DSM 785 / 114-95).